An 85-amino-acid polypeptide reads, in one-letter code: MIMAKLKSAKGKKFLFGLLAVFIIAASVVTRATIGGVIEQYNIPLSEWTTSMYVIQSSMIFVYSLVFTVLLAIPLGIYFLGGEEQ.

2 helical membrane-spanning segments follow: residues 14 to 34 and 60 to 80; these read FLFG…RATI and IFVY…IYFL.

It is found in the cell membrane. This is an uncharacterized protein from Escherichia coli O157:H7.